The following is a 91-amino-acid chain: MFQKQERIGLVVYLYYNRDARKLSKFGDLYYHSKRSRYLIIYINKNDLDTKLEEMRRLKCVKDIRPSAFDDIDRQFVGNLHRDETNNHQKG.

It belongs to the UPF0298 family.

It localises to the cytoplasm. The polypeptide is UPF0298 protein spyM18_0447 (Streptococcus pyogenes serotype M18 (strain MGAS8232)).